The chain runs to 261 residues: tRNA pseudouridine synthase A (261 aa).

Asp52 (nucleophile) is an active-site residue. A substrate-binding site is contributed by Tyr110.

The protein belongs to the tRNA pseudouridine synthase TruA family. In terms of assembly, homodimer.

The enzyme catalyses uridine(38/39/40) in tRNA = pseudouridine(38/39/40) in tRNA. Functionally, formation of pseudouridine at positions 38, 39 and 40 in the anticodon stem and loop of transfer RNAs. The polypeptide is tRNA pseudouridine synthase A (Coxiella burnetii (strain CbuK_Q154) (Coxiella burnetii (strain Q154))).